The chain runs to 370 residues: Elongation factor Ts, mitochondrial (370 aa).

A mitochondrion-targeting transit peptide spans 1–29 (MALLSAAPRALRLPRRLPLGAALPALRAL).

This sequence belongs to the EF-Ts family.

It is found in the mitochondrion. In terms of biological role, associates with the EF-Tu.GDP complex and induces the exchange of GDP to GTP. It remains bound to the aminoacyl-tRNA.EF-Tu.GTP complex up to the GTP hydrolysis stage on the ribosome. The chain is Elongation factor Ts, mitochondrial from Cryptococcus neoformans var. neoformans serotype D (strain B-3501A) (Filobasidiella neoformans).